A 272-amino-acid chain; its full sequence is Shikimate dehydrogenase (NADP(+)) (272 aa).

Shikimate contacts are provided by residues 16–18 and threonine 63; that span reads SLS. The active-site Proton acceptor is lysine 67. Residue glutamate 79 participates in NADP(+) binding. Residues asparagine 88 and aspartate 103 each coordinate shikimate. Residues 127–131, 151–156, and isoleucine 212 contribute to the NADP(+) site; these read GAGGA and NRTMSR. Position 214 (tyrosine 214) interacts with shikimate. Glycine 235 contributes to the NADP(+) binding site.

It belongs to the shikimate dehydrogenase family. As to quaternary structure, homodimer.

It carries out the reaction shikimate + NADP(+) = 3-dehydroshikimate + NADPH + H(+). It functions in the pathway metabolic intermediate biosynthesis; chorismate biosynthesis; chorismate from D-erythrose 4-phosphate and phosphoenolpyruvate: step 4/7. Functionally, involved in the biosynthesis of the chorismate, which leads to the biosynthesis of aromatic amino acids. Catalyzes the reversible NADPH linked reduction of 3-dehydroshikimate (DHSA) to yield shikimate (SA). The chain is Shikimate dehydrogenase (NADP(+)) from Staphylococcus epidermidis (strain ATCC 12228 / FDA PCI 1200).